The sequence spans 364 residues: Chorismate synthase (364 aa).

Arg48 is an NADP(+) binding site. FMN is bound by residues 125 to 127 (RSS), 237 to 238 (NA), Gly277, 292 to 296 (KPTSS), and Arg318.

The protein belongs to the chorismate synthase family. In terms of assembly, homotetramer. The cofactor is FMNH2.

It carries out the reaction 5-O-(1-carboxyvinyl)-3-phosphoshikimate = chorismate + phosphate. It functions in the pathway metabolic intermediate biosynthesis; chorismate biosynthesis; chorismate from D-erythrose 4-phosphate and phosphoenolpyruvate: step 7/7. In terms of biological role, catalyzes the anti-1,4-elimination of the C-3 phosphate and the C-6 proR hydrogen from 5-enolpyruvylshikimate-3-phosphate (EPSP) to yield chorismate, which is the branch point compound that serves as the starting substrate for the three terminal pathways of aromatic amino acid biosynthesis. This reaction introduces a second double bond into the aromatic ring system. This chain is Chorismate synthase, found in Albidiferax ferrireducens (strain ATCC BAA-621 / DSM 15236 / T118) (Rhodoferax ferrireducens).